The following is a 1015-amino-acid chain: Condensin complex subunit 3 (1015 aa).

HEAT repeat units follow at residues 94 to 131, 138 to 173, 174 to 212, 238 to 275, and 276 to 313; these read GLLNYLFTFLLKSHEANSNAVRFRVCLLINKLLGSMPE, DVFDKINKAMLIRLKDKIPNVRIQAVLALSRLQDPK, DDECPVVNAYATLIENDSNPEVRRAVLSCIAPSAKTLPK, MRAMSIAQRVMLLQQGLNDRSDAVKQAMQKHLLQGWLR, and FSEGNILELLHRLDVENSSEVAVSVLNALFSITPLSEL. Ser-390 bears the Phosphoserine mark. HEAT repeat units lie at residues 399-436, 439-478, and 617-654; these read EFIGQQLILIIKSLDTSEEGGRKKLLAVLQEILILPTI, SLVSFLVERLLHIIIDDNKRTQIVTEIISEIRAPIVTVGV, and DFARKHFVLLLQVLQIDDVTIKISALKAIFDQLMTFGI. Ser-674 carries the post-translational modification Phosphoserine. 2 HEAT repeats span residues 687–724 and 865–907; these read ATAKNVLKLLSDFLDSEVSELRTGAAEGLAKLMFSGLL and KDLL…QAEA. The residue at position 931 (Thr-931) is a Phosphothreonine. The span at 941 to 950 shows a compositional bias: polar residues; the sequence is ASKSTQLKTN. Residues 941–994 form a disordered region; that stretch reads ASKSTQLKTNRGQRKVTVSARTNRRCQTAEADSESDHEVPEPESEMKMRLPRRA. Phosphoserine occurs at positions 973, 975, 1002, and 1015. Positions 974 to 988 are enriched in basic and acidic residues; the sequence is ESDHEVPEPESEMKM.

Belongs to the CND3 (condensin subunit 3) family. As to quaternary structure, component of the condensin complex, which contains the SMC2 and SMC4 heterodimer, and three non SMC subunits that probably regulate the complex: NCAPH/BRRN1, NCAPD2/CAPD2 and NCAPG. In terms of processing, phosphorylated by CDK1. Its phosphorylation, as well as that of NCAPD2 and NCAPH subunits, activates the condensin complex and is required for chromosome condensation. As to expression, highly expressed in testis.

It is found in the nucleus. The protein resides in the cytoplasm. The protein localises to the chromosome. Its function is as follows. Regulatory subunit of the condensin complex, a complex required for conversion of interphase chromatin into mitotic-like condense chromosomes. The condensin complex probably introduces positive supercoils into relaxed DNA in the presence of type I topoisomerases and converts nicked DNA into positive knotted forms in the presence of type II topoisomerases. In Homo sapiens (Human), this protein is Condensin complex subunit 3 (NCAPG).